We begin with the raw amino-acid sequence, 384 residues long: Epoxyqueuosine reductase (384 aa).

D144 serves as the catalytic Proton donor. The region spanning 186 to 218 is the 4Fe-4S ferredoxin-type domain; the sequence is LPLPVDQPVEEGCGKCVACMTICPTGAIVEPYT. C198, C201, C204, C208, C224, C251, C254, and C258 together coordinate [4Fe-4S] cluster.

It belongs to the QueG family. As to quaternary structure, monomer. The cofactor is cob(II)alamin. [4Fe-4S] cluster is required as a cofactor.

The protein resides in the cytoplasm. It catalyses the reaction epoxyqueuosine(34) in tRNA + AH2 = queuosine(34) in tRNA + A + H2O. It functions in the pathway tRNA modification; tRNA-queuosine biosynthesis. Catalyzes the conversion of epoxyqueuosine (oQ) to queuosine (Q), which is a hypermodified base found in the wobble positions of tRNA(Asp), tRNA(Asn), tRNA(His) and tRNA(Tyr). The sequence is that of Epoxyqueuosine reductase from Salmonella typhimurium (strain LT2 / SGSC1412 / ATCC 700720).